The sequence spans 230 residues: Small ribosomal subunit protein uS3 (230 aa).

In terms of domain architecture, KH type-2 spans 39–107 (IRKFLTEKLK…PAQINISEVR (69 aa)).

It belongs to the universal ribosomal protein uS3 family. In terms of assembly, part of the 30S ribosomal subunit. Forms a tight complex with proteins S10 and S14.

Binds the lower part of the 30S subunit head. Binds mRNA in the 70S ribosome, positioning it for translation. This chain is Small ribosomal subunit protein uS3, found in Psychromonas ingrahamii (strain DSM 17664 / CCUG 51855 / 37).